Consider the following 66-residue polypeptide: Large ribosomal subunit protein bL35 (66 aa).

The segment covering 1–16 (MPKQKTHRASAKRFKR) has biased composition (basic residues). A disordered region spans residues 1–21 (MPKQKTHRASAKRFKRTGSGG).

This sequence belongs to the bacterial ribosomal protein bL35 family.

This is Large ribosomal subunit protein bL35 from Streptococcus sanguinis (strain SK36).